We begin with the raw amino-acid sequence, 569 residues long: Membrane protein insertase YidC (569 aa).

A helical transmembrane segment spans residues 6–26; that stretch reads FVLFLIFATSLLFLWDAWQKE. 2 stretches are compositionally biased toward polar residues: residues 32-52 and 62-74; these read QGPKTAVQGTETQANTGTAGT and LASSVPQRGSTAE. The tract at residues 32–81 is disordered; sequence QGPKTAVQGTETQANTGTAGTAETPVPGDQLASSVPQRGSTAENGAPVRA. 5 consecutive transmembrane segments (helical) span residues 348 to 368, 375 to 395, 442 to 462, 479 to 499, and 519 to 539; these read VVDYGWLTVIGAPLFWLLSLF, WGVAIILLTMSVKLAFFPLSA, GGCLPILVQIPVFISLYWVLL, LSAPDPYYVLPVIMGISMFLQ, and PLAFSVFFFFFPAGLVLYSLV.

This sequence belongs to the OXA1/ALB3/YidC family. Type 1 subfamily. Interacts with the Sec translocase complex via SecD. Specifically interacts with transmembrane segments of nascent integral membrane proteins during membrane integration.

The protein localises to the cell inner membrane. Required for the insertion and/or proper folding and/or complex formation of integral membrane proteins into the membrane. Involved in integration of membrane proteins that insert both dependently and independently of the Sec translocase complex, as well as at least some lipoproteins. Aids folding of multispanning membrane proteins. This chain is Membrane protein insertase YidC, found in Nitrosospira multiformis (strain ATCC 25196 / NCIMB 11849 / C 71).